A 189-amino-acid chain; its full sequence is UPF0301 protein CAB604 (189 aa).

Belongs to the UPF0301 (AlgH) family.

The sequence is that of UPF0301 protein CAB604 from Chlamydia abortus (strain DSM 27085 / S26/3) (Chlamydophila abortus).